The sequence spans 221 residues: NAD(P)H-hydrate epimerase (221 aa).

One can recognise a YjeF N-terminal domain in the interval 10–211; it reads MQQYDQYTIN…DIGIYSPAEL (202 aa). 58–62 contributes to the (6S)-NADPHX binding site; the sequence is NNGGD. Positions 59 and 121 each coordinate K(+). (6S)-NADPHX contacts are provided by residues 125 to 131 and Asp154; that span reads GIGLSKP. Residue Ser157 coordinates K(+).

The protein belongs to the NnrE/AIBP family. Requires K(+) as cofactor.

It catalyses the reaction (6R)-NADHX = (6S)-NADHX. It carries out the reaction (6R)-NADPHX = (6S)-NADPHX. In terms of biological role, catalyzes the epimerization of the S- and R-forms of NAD(P)HX, a damaged form of NAD(P)H that is a result of enzymatic or heat-dependent hydration. This is a prerequisite for the S-specific NAD(P)H-hydrate dehydratase to allow the repair of both epimers of NAD(P)HX. The polypeptide is NAD(P)H-hydrate epimerase (Weissella koreensis (strain KACC 15510)).